The sequence spans 56 residues: Attractin (56 aa).

Disulfide bonds link C4/C41, C13/C33, and C20/C26. Residue N25 is glycosylated (N-linked (GlcNAc...) asparagine).

Produced by the albumen gland of the egg cordons.

The protein resides in the secreted. In terms of biological role, water-borne pheromone that attract the marine mollusk Aplysia into breeding aggregations and coordinate male and female reproductive behavior within the aggregation. The polypeptide is Attractin (ATT) (Aplysia depilans (Sea hare)).